Here is a 335-residue protein sequence, read N- to C-terminus: Methionine import ATP-binding protein MetN 1 (335 aa).

In terms of domain architecture, ABC transporter spans 2–242; the sequence is IEFQNVHKTY…PKHPTTRRFV (241 aa). Position 38–45 (38–45) interacts with ATP; the sequence is GHSGAGKS.

The protein belongs to the ABC transporter superfamily. Methionine importer (TC 3.A.1.24) family. As to quaternary structure, the complex is composed of two ATP-binding proteins (MetN), two transmembrane proteins (MetI) and a solute-binding protein (MetQ).

The protein localises to the cell inner membrane. It carries out the reaction L-methionine(out) + ATP + H2O = L-methionine(in) + ADP + phosphate + H(+). The catalysed reaction is D-methionine(out) + ATP + H2O = D-methionine(in) + ADP + phosphate + H(+). In terms of biological role, part of the ABC transporter complex MetNIQ involved in methionine import. Responsible for energy coupling to the transport system. This chain is Methionine import ATP-binding protein MetN 1, found in Pseudomonas fluorescens (strain ATCC BAA-477 / NRRL B-23932 / Pf-5).